A 392-amino-acid chain; its full sequence is Phosphoglycerate kinase (392 aa).

Substrate-binding positions include 21 to 23 (DLN), Arg-36, 59 to 62 (HLGR), Arg-114, and Arg-147. Residues Lys-198, Glu-320, and 346-349 (GGDT) contribute to the ATP site.

This sequence belongs to the phosphoglycerate kinase family. As to quaternary structure, monomer.

It is found in the cytoplasm. The catalysed reaction is (2R)-3-phosphoglycerate + ATP = (2R)-3-phospho-glyceroyl phosphate + ADP. Its pathway is carbohydrate degradation; glycolysis; pyruvate from D-glyceraldehyde 3-phosphate: step 2/5. In Nitrosomonas eutropha (strain DSM 101675 / C91 / Nm57), this protein is Phosphoglycerate kinase.